A 924-amino-acid polypeptide reads, in one-letter code: Protein SMAX1-LIKE 2 (924 aa).

Residues 8 to 181 (IQQTLTPEAA…SAIEQSLIGN (174 aa)) enclose the Clp R domain. Residues 12 to 83 (LTPEAATVLN…LCFSVALERL (72 aa)) form a repeat 1 region. The segment covering 86–105 (TSTTTTTTSSSSSSSPSQTQ) has biased composition (low complexity). Positions 86–107 (TSTTTTTTSSSSSSSPSQTQEP) are disordered. The interval 109-181 (LSNALTAALK…SAIEQSLIGN (73 aa)) is repeat 2. Residues 522–552 (TRSDITPPGSPVGTDLVLGRPNRGLSSPEKK) are disordered. The EAR motif lies at 780–784 (FDLNE).

Belongs to the ClpA/ClpB family. Interacts probably with TPL/TPR in an EAR-motif dependent manner. Expressed in seedlings and leaves. Detected in roots and axillary branches.

In terms of biological role, probable component of a transcriptional corepressor complex that acts specifically in the karrikin pathway. Controls seedling growth redundantly with SMAX1, but is not involved in leaf morphology, shoot branching or germination control. In Arabidopsis thaliana (Mouse-ear cress), this protein is Protein SMAX1-LIKE 2.